The following is a 226-amino-acid chain: UPF0173 metal-dependent hydrolase GFO_2312 (226 aa).

This sequence belongs to the UPF0173 family.

The polypeptide is UPF0173 metal-dependent hydrolase GFO_2312 (Christiangramia forsetii (strain DSM 17595 / CGMCC 1.15422 / KT0803) (Gramella forsetii)).